A 435-amino-acid chain; its full sequence is Tryptophan--tRNA ligase (435 aa).

ATP-binding positions include threonine 10–serine 12 and glycine 18–asparagine 19. A 'HIGH' region motif is present at residues threonine 11–asparagine 19. Position 143 (aspartate 143) interacts with L-tryptophan. Residues glycine 155 to aspartate 157, leucine 195, and lysine 202 to serine 206 contribute to the ATP site. A 'KMSKS' region motif is present at residues lysine 202 to serine 206.

This sequence belongs to the class-I aminoacyl-tRNA synthetase family. As to quaternary structure, homodimer.

It is found in the cytoplasm. It catalyses the reaction tRNA(Trp) + L-tryptophan + ATP = L-tryptophyl-tRNA(Trp) + AMP + diphosphate + H(+). Functionally, catalyzes the attachment of tryptophan to tRNA(Trp). This is Tryptophan--tRNA ligase from Xylella fastidiosa (strain Temecula1 / ATCC 700964).